Reading from the N-terminus, the 531-residue chain is RCC1 and BTB domain-containing protein 1 (531 aa).

RCC1 repeat units follow at residues 40–91 (NDEV…LLST), 93–145 (DGVV…ALAA), 147–198 (GEVF…AVLD), 199–250 (NGEV…ALTD), 252–302 (GLLY…AAKT), and 304–356 (GGHV…FLTV). 2 BTB domains span residues 370–437 (ADLK…DLPP) and 470–499 (ENAFSLFSAAVRYDAEDLEEFCFKFCINHL).

In terms of tissue distribution, ubiquitously expressed. In the retina, present in the nerve fiber layer and to a lesser extent in the inner and outer plexiform layers (at protein level).

It localises to the nucleus. Its function is as follows. May be involved in cell cycle regulation by chromatin remodeling. This chain is RCC1 and BTB domain-containing protein 1 (RCBTB1), found in Homo sapiens (Human).